Consider the following 127-residue polypeptide: Protein ApaG (127 aa).

In terms of domain architecture, ApaG spans 3–127 (ESEKYRIEVE…FMLAMPRVLH (125 aa)).

The sequence is that of Protein ApaG from Aromatoleum aromaticum (strain DSM 19018 / LMG 30748 / EbN1) (Azoarcus sp. (strain EbN1)).